Consider the following 188-residue polypeptide: Epididymal-specific lipocalin-5 (188 aa).

The signal sequence occupies residues 1–19; sequence MENIMPFALLGLCVGLAAG. A disulfide bridge links Cys-82 with Cys-176.

Belongs to the calycin superfamily. Lipocalin family. There are two similar, immunologically cross-reacting forms of this protein, designated B and C, which probably result from different processing of the amino end. Post-translationally, the N-terminus of form C is probably blocked. In terms of tissue distribution, synthesized exclusively in the proximal part (caput epididymidis) of the epididymis. It makes up a substantial part of the total protein in the epididymal luminal fluid and binds to the sperm membrane.

The protein resides in the secreted. In terms of biological role, associates with spermatozoa in the epididymal fluid but does not bind tightly to them. Binds both all-trans and 9-cis retinoic acid. May act as a retinoid carrier protein which is required for epididymal function and/or sperm maturation. This is Epididymal-specific lipocalin-5 (Lcn5) from Rattus norvegicus (Rat).